We begin with the raw amino-acid sequence, 314 residues long: MFSINPLENLKLYISSRPPLVVFMISVSAMAIAFLTLGYFFKIKEIKSPEMAEDWNTFLLRFNDLDLCVSENETLKHLSNDTTTPESTMTVGQARSSTQPPQSLEESGPINISVAITLTLDPLKPFGGYSRNVTHLYSTILGHQIGLSGREAHEEINITFTLPAAWNADDCALHGHCEQAVFTACMTLTAAPGVFPVTVQPPHCIPDTYSNATLWYKIFTTARDANTKYAQDYNPFWCYKGAIGKVYHALNPKLTVVVPDDDRSLINLHLMHTSYFLFVMVITMFCYAVIKGRPSKLRQSNPEFCPEKVALADA.

A helical membrane pass occupies residues 21–41 (VVFMISVSAMAIAFLTLGYFF). The segment at 78–106 (LSNDTTTPESTMTVGQARSSTQPPQSLEE) is disordered. Positions 80 to 105 (NDTTTPESTMTVGQARSSTQPPQSLE) are enriched in polar residues. Transmembrane regions (helical) follow at residues 179–199 (QAVF…PVTV), 236–258 (FWCY…TVVV), and 270–290 (LMHT…YAVI).

Belongs to the TMEM248 family.

The protein localises to the membrane. The polypeptide is Transmembrane protein 248 (Tmem248) (Mus musculus (Mouse)).